Here is a 953-residue protein sequence, read N- to C-terminus: Translation initiation factor IF-2 (953 aa).

The tract at residues 55–340 is disordered; the sequence is GVTTEAPAAS…KSKRQKRNEY (286 aa). Residues 81–93 show a composition bias toward low complexity; it reads KPAATPQQAAKPA. Residues 110 to 119 show a composition bias toward pro residues; sequence PKPAAKPVPK. Composition is skewed to low complexity over residues 123 to 133 and 143 to 160; these read SAAKAESSAPK and KPAA…MPRP. The span at 202 to 219 shows a compositional bias: gly residues; the sequence is PGGGPRPGGNRPQGGQGG. Low complexity predominate over residues 233 to 248; that stretch reads QPRPQGGSRSQQSGGQ. Residues 280–323 show a composition bias toward gly residues; the sequence is NGRGGAGGQGGRPGFGGGRPGGGGSAGGRGGRRGGTAGAFGRPG. The span at 327-336 shows a compositional bias: basic residues; it reads RKGRKSKRQK. The 173-residue stretch at 449-621 folds into the tr-type G domain; it reads KRPPVVTVMG…VLLTADASLD (173 aa). Positions 458–465 are G1; sequence GHVDHGKT. 458–465 contacts GTP; it reads GHVDHGKT. Residues 483–487 form a G2 region; that stretch reads GITQG. The tract at residues 508–511 is G3; that stretch reads DTPG. GTP contacts are provided by residues 508–512 and 562–565; these read DTPGH and NKID. The interval 562 to 565 is G4; that stretch reads NKID. The tract at residues 598-600 is G5; it reads SAK.

This sequence belongs to the TRAFAC class translation factor GTPase superfamily. Classic translation factor GTPase family. IF-2 subfamily.

The protein localises to the cytoplasm. In terms of biological role, one of the essential components for the initiation of protein synthesis. Protects formylmethionyl-tRNA from spontaneous hydrolysis and promotes its binding to the 30S ribosomal subunits. Also involved in the hydrolysis of GTP during the formation of the 70S ribosomal complex. The polypeptide is Translation initiation factor IF-2 (Corynebacterium diphtheriae (strain ATCC 700971 / NCTC 13129 / Biotype gravis)).